We begin with the raw amino-acid sequence, 345 residues long: Trans-enoyl reductase tndF (345 aa).

The disordered stretch occupies residues 1–26; that stretch reads MAREHQAAILPQPGGPLSVGMRPTPK. Residues 44 to 49, 168 to 171, 191 to 194, Y209, and 244 to 245 each bind NADP(+); these read CDYYQR, SSSV, SPEH, and LD.

It belongs to the zinc-containing alcohol dehydrogenase family.

Its pathway is secondary metabolite biosynthesis; terpenoid biosynthesis. Functionally, trans-enoyl reductase; part of the gene cluster that mediates the biosynthesis of talaronoid C, a fusicoccane diterpenoid with an unprecedented tricyclic 5/8/6 ring system. The first step in the pathway is performed by the fusicoccadiene synthase tndC that possesses both prenyl transferase and terpene cyclase activity, converting isopentenyl diphosphate and dimethylallyl diphosphate into geranylgeranyl diphosphate (GGDP) and further converting GGDP into talarodiene, a precursor for talaronoid C. The remaining enzymes from the cluster include the cytochrome P450 monooxygenase tndB, the aldehyde reductase tndE and the alcohol dehydrogenase tndF that are involved in the conversion of talarodiene into talaronoid C. This chain is Trans-enoyl reductase tndF, found in Aspergillus flavipes.